The following is a 125-amino-acid chain: Calcitonin receptor-stimulating peptide 1 (125 aa).

Positions 1 to 25 are cleaved as a signal peptide; sequence MGFWKFPPFLVLSILVLYQAGMFHA. A propeptide spanning residues 26 to 77 is cleaved from the precursor; sequence APFRSVFDGRFDPATLDEEESRLLLAAMVNDYEQMRARESEKAQKTEGSRIQ. C81 and C86 form a disulfide bridge.

This sequence belongs to the calcitonin family.

The protein resides in the secreted. Its function is as follows. Stimulates cAMP production in porcine kidney cell line LLC-PK1 via the calcitonin receptor (CT) but not via the CT-like (CL) receptor. This chain is Calcitonin receptor-stimulating peptide 1 (CRSP1), found in Capra hircus (Goat).